A 123-amino-acid polypeptide reads, in one-letter code: Small ribosomal subunit protein uS13 (123 aa).

Residues 93–123 form a disordered region; the sequence is RRNLPVRGQKTKTNARTRKGPKRAIGGKKKK.

Belongs to the universal ribosomal protein uS13 family. As to quaternary structure, part of the 30S ribosomal subunit. Forms a loose heterodimer with protein S19. Forms two bridges to the 50S subunit in the 70S ribosome.

Functionally, located at the top of the head of the 30S subunit, it contacts several helices of the 16S rRNA. In the 70S ribosome it contacts the 23S rRNA (bridge B1a) and protein L5 of the 50S subunit (bridge B1b), connecting the 2 subunits; these bridges are implicated in subunit movement. Contacts the tRNAs in the A and P-sites. In Clostridium botulinum (strain Kyoto / Type A2), this protein is Small ribosomal subunit protein uS13.